Here is a 488-residue protein sequence, read N- to C-terminus: Proline--tRNA ligase (488 aa).

It belongs to the class-II aminoacyl-tRNA synthetase family. ProS type 3 subfamily. As to quaternary structure, homodimer.

Its subcellular location is the cytoplasm. The enzyme catalyses tRNA(Pro) + L-proline + ATP = L-prolyl-tRNA(Pro) + AMP + diphosphate. In terms of biological role, catalyzes the attachment of proline to tRNA(Pro) in a two-step reaction: proline is first activated by ATP to form Pro-AMP and then transferred to the acceptor end of tRNA(Pro). Can inadvertently accommodate and process cysteine. This is Proline--tRNA ligase (proS) from Borreliella burgdorferi (strain ATCC 35210 / DSM 4680 / CIP 102532 / B31) (Borrelia burgdorferi).